Reading from the N-terminus, the 124-residue chain is Ragulator complex protein LAMTOR2 homolog (124 aa).

Belongs to the GAMAD family. In terms of assembly, part of the Ragulator complex.

In terms of biological role, regulator of the TOR pathway, a signaling cascade that promotes cell growth in response to growth factors, energy levels, and amino acids. May activate the TOR signaling cascade in response to amino acids. This is Ragulator complex protein LAMTOR2 homolog from Caenorhabditis elegans.